A 283-amino-acid chain; its full sequence is Putative cytochrome b-c1 complex subunit Rieske-like protein 1 (283 aa).

A helical transmembrane segment spans residues 116–149 (TEARKGFSYLVTGVTTVGVAYAAKNAVTQFVSSM). The Rieske domain maps to 196-281 (EAAVELSQLR…YEFTSDDMVI (86 aa)). Positions 226, 228, 245, and 248 each coordinate [2Fe-2S] cluster. Cys-231 and Cys-247 are joined by a disulfide.

The protein belongs to the Rieske iron-sulfur protein family. The cofactor is [2Fe-2S] cluster.

Its subcellular location is the membrane. This Homo sapiens (Human) protein is Putative cytochrome b-c1 complex subunit Rieske-like protein 1 (UQCRFS1P1).